The following is a 24-amino-acid chain: Hemocyanin subunit 4e (24 aa).

It belongs to the tyrosinase family. Hemocyanin subfamily. In terms of tissue distribution, hemolymph.

It localises to the secreted. The protein resides in the extracellular space. In terms of biological role, hemocyanins are copper-containing oxygen carriers occurring freely dissolved in the hemolymph of many mollusks and arthropods. The chain is Hemocyanin subunit 4e from Maja squinado (Mediterranean spider crab).